The chain runs to 165 residues: Sec-independent protein translocase protein TatB (165 aa).

Residues 1-21 (MFDVSFTELIVIGVVALIVLG) form a helical membrane-spanning segment. Over residues 67–84 (DSTAQDVNQSLRSATDSL) the composition is skewed to polar residues. The interval 67-165 (DSTAQDVNQS…PKSPSTGNAT (99 aa)) is disordered. Residues 127–159 (KLPGTPATLPATAAAEPTPAAPAASQAEAPKSP) show a composition bias toward low complexity.

This sequence belongs to the TatB family. As to quaternary structure, the Tat system comprises two distinct complexes: a TatABC complex, containing multiple copies of TatA, TatB and TatC subunits, and a separate TatA complex, containing only TatA subunits. Substrates initially bind to the TatABC complex, which probably triggers association of the separate TatA complex to form the active translocon.

It localises to the cell inner membrane. Its function is as follows. Part of the twin-arginine translocation (Tat) system that transports large folded proteins containing a characteristic twin-arginine motif in their signal peptide across membranes. Together with TatC, TatB is part of a receptor directly interacting with Tat signal peptides. TatB may form an oligomeric binding site that transiently accommodates folded Tat precursor proteins before their translocation. The sequence is that of Sec-independent protein translocase protein TatB from Bordetella avium (strain 197N).